The sequence spans 416 residues: Serine hydroxymethyltransferase (416 aa).

(6S)-5,6,7,8-tetrahydrofolate is bound by residues Leu-121 and 125 to 127 (GHL). Lys-229 is modified (N6-(pyridoxal phosphate)lysine).

This sequence belongs to the SHMT family. As to quaternary structure, homodimer. Requires pyridoxal 5'-phosphate as cofactor.

It localises to the cytoplasm. It carries out the reaction (6R)-5,10-methylene-5,6,7,8-tetrahydrofolate + glycine + H2O = (6S)-5,6,7,8-tetrahydrofolate + L-serine. It participates in one-carbon metabolism; tetrahydrofolate interconversion. It functions in the pathway amino-acid biosynthesis; glycine biosynthesis; glycine from L-serine: step 1/1. Catalyzes the reversible interconversion of serine and glycine with tetrahydrofolate (THF) serving as the one-carbon carrier. This reaction serves as the major source of one-carbon groups required for the biosynthesis of purines, thymidylate, methionine, and other important biomolecules. Also exhibits THF-independent aldolase activity toward beta-hydroxyamino acids, producing glycine and aldehydes, via a retro-aldol mechanism. This is Serine hydroxymethyltransferase from Neisseria gonorrhoeae (strain NCCP11945).